The sequence spans 2199 residues: DNA polymerase epsilon catalytic subunit A (2199 aa).

Zn(2+) is bound by residues cysteine 2069, cysteine 2072, cysteine 2104, and cysteine 2107. The segment at 2069 to 2107 (CKQCGVHQDFDLCLHEHLWPTRDDMGTLVFSDGWSCSSC) adopts a CysA-type zinc-finger fold. 4 residues coordinate [4Fe-4S] cluster: cysteine 2138, cysteine 2141, cysteine 2153, and cysteine 2155. Positions 2138-2155 (CSKCKTVKQWSLKERCSC) match the CysB motif motif.

This sequence belongs to the DNA polymerase type-B family. In terms of assembly, heterotetramer. Consists of 4 subunits: pol2, dpb2, dpb3 and dpb4. The cofactor is [4Fe-4S] cluster.

Its subcellular location is the nucleus. The catalysed reaction is DNA(n) + a 2'-deoxyribonucleoside 5'-triphosphate = DNA(n+1) + diphosphate. In terms of biological role, DNA polymerase II participates in chromosomal DNA replication. This is DNA polymerase epsilon catalytic subunit A (pol2) from Schizosaccharomyces pombe (strain 972 / ATCC 24843) (Fission yeast).